Reading from the N-terminus, the 116-residue chain is Putative iron-sulfur cluster insertion protein ErpA (116 aa).

Iron-sulfur cluster-binding residues include Cys-44, Cys-108, and Cys-110.

The protein belongs to the HesB/IscA family. As to quaternary structure, homodimer. Iron-sulfur cluster is required as a cofactor.

Functionally, required for insertion of 4Fe-4S clusters. This Thiobacillus denitrificans (strain ATCC 25259 / T1) protein is Putative iron-sulfur cluster insertion protein ErpA.